Here is a 199-residue protein sequence, read N- to C-terminus: uncharacterized protein (199 aa).

Helical transmembrane passes span 27-47, 55-75, and 172-192; these read LIKI…PILA, LLTL…VAAL, and LLLL…VLLL.

Its subcellular location is the cell membrane. This is an uncharacterized protein from Synechocystis sp. (strain ATCC 27184 / PCC 6803 / Kazusa).